The chain runs to 65 residues: Large ribosomal subunit protein uL29 (65 aa).

Belongs to the universal ribosomal protein uL29 family.

This chain is Large ribosomal subunit protein uL29, found in Thioalkalivibrio sulfidiphilus (strain HL-EbGR7).